Reading from the N-terminus, the 383-residue chain is 8-amino-7-oxononanoate synthase (383 aa).

Arginine 21 lines the substrate pocket. Position 108–109 (108–109 (GY)) interacts with pyridoxal 5'-phosphate. Histidine 133 contacts substrate. Pyridoxal 5'-phosphate is bound by residues serine 179, histidine 207, and threonine 233. Position 236 is an N6-(pyridoxal phosphate)lysine (lysine 236). Residue threonine 350 coordinates substrate.

This sequence belongs to the class-II pyridoxal-phosphate-dependent aminotransferase family. BioF subfamily. In terms of assembly, homodimer. The cofactor is pyridoxal 5'-phosphate.

The catalysed reaction is 6-carboxyhexanoyl-[ACP] + L-alanine + H(+) = (8S)-8-amino-7-oxononanoate + holo-[ACP] + CO2. The protein operates within cofactor biosynthesis; biotin biosynthesis. Its function is as follows. Catalyzes the decarboxylative condensation of pimeloyl-[acyl-carrier protein] and L-alanine to produce 8-amino-7-oxononanoate (AON), [acyl-carrier protein], and carbon dioxide. This Yersinia pestis bv. Antiqua (strain Angola) protein is 8-amino-7-oxononanoate synthase.